The sequence spans 240 residues: Vacuolar-sorting protein SNF7 (240 aa).

The residue at position 72 (threonine 72) is a Phosphothreonine. 2 positions are modified to phosphoserine: serine 119 and serine 193. The interval 193-240 (SENKVSLPSVPSNKIKQSENSVKDGEEEEDEEDEDEKALRELQAEMGL) is disordered. Over residues 195 to 212 (NKVSLPSVPSNKIKQSEN) the composition is skewed to polar residues. The span at 217–228 (GEEEEDEEDEDE) shows a compositional bias: acidic residues. Residue lysine 229 forms a Glycyl lysine isopeptide (Lys-Gly) (interchain with G-Cter in ubiquitin) linkage. Residues 229-240 (KALRELQAEMGL) are compositionally biased toward basic and acidic residues.

The protein belongs to the SNF7 family. Core component of the ESCRT-III complex (endosomal sorting required for transport complex III). ESCRT-III appears to be sequentially assembled as a flat lattice on the endosome membrane and forms a transient 450 kDa complex that contains DID4, oligomerized SNF7, VPS20 and VPS24. SNF7 polymerizes into spirals at the surface of lipid bilayers. SNF7 polymerization is nucleated by association of SNF7 with VPS20; the process is terminated through association of VPS24, possibly by capping the SNF7 filament. Interacts with VTA1; the interaction requires DID2. Interacts with BRO1. Interacts with DOA4. Interacts with HEH1 and HEH2. Interacts with RIM20 and YGR122W.

It localises to the cytoplasm. Its subcellular location is the endosome membrane. The protein resides in the nucleus envelope. Its function is as follows. Acts a component of the ESCRT-III complex required for the sorting and concentration of proteins resulting in the entry of these proteins into the invaginating vesicles of the multivesicular body (MVB). The sequential action of ESCRT-0, -I, and -II together with the ordered assembly of ESCRT-III links membrane invagination to cargo sorting. Membrane scission in the neck of the growing vesicle releases mature, cargo-laden ILVs into the lumen. ESCRT-III is critical for late steps in MVB sorting, such as membrane invagination and final cargo sorting and recruitment of late-acting components of the sorting machinery. SNF7 is the most abundant ESCRT-III subunit which forms membrane-sculpting filaments with 30 Angstrom periodicity and a exposed cationic membrane-binding surface. Its activation requires a prominent conformational rearrangement to expose protein-membrane and protein-protein interfaces. SNF7 filaments then form spirals that could function as spiral springs. The elastic expansion of compressed SNF7 spirals generates an area difference between the two sides of the membrane and thus curvature which could be the origin of membrane deformation leading eventually to fission. SNF7 recruits BRO1, which in turn recruits DOA4, which deubiquitinates cargos before their enclosure within MVB vesicles. ESCRT-III is also recruited to the nuclear envelope (NE) by integral INM proteins to surveil and clear defective nuclear pore complex (NPC) assembly intermediates to ensure the fidelity of NPC assembly. This chain is Vacuolar-sorting protein SNF7, found in Saccharomyces cerevisiae (strain ATCC 204508 / S288c) (Baker's yeast).